The primary structure comprises 591 residues: Mono(ADP-ribosyl)transferase SpvB (591 aa).

The TR mART core domain maps to 373-576; sequence PMMGGNSSRP…LRLSDDATAD (204 aa). Active-site residues include Arg-471, Ser-501, and Glu-538.

It belongs to the SpvB family.

It localises to the secreted. It carries out the reaction L-arginyl-[protein] + NAD(+) = N(omega)-(ADP-D-ribosyl)-L-arginyl-[protein] + nicotinamide + H(+). Its function is as follows. Mono-ADP-ribosylates eukaryotic muscle and non-muscle actin on 'Arg-177'. ADP-ribosylation prevents the polymerization of G-actin to F-actin, causing actin filament depolymerization, destruction of the cytoskeleton and cytotoxicity. Does not possess NAD(+)-glycohydrolase activity, unlike most mART enzymes. This Salmonella enteritidis protein is Mono(ADP-ribosyl)transferase SpvB (spvB).